A 147-amino-acid chain; its full sequence is UPF0306 protein YhbP (147 aa).

Belongs to the UPF0306 family.

The protein is UPF0306 protein YhbP of Salmonella schwarzengrund (strain CVM19633).